We begin with the raw amino-acid sequence, 213 residues long: 3-demethoxyubiquinol 3-hydroxylase (213 aa).

6 residues coordinate Fe cation: E62, E92, H95, E144, E176, and H179.

Belongs to the COQ7 family. The cofactor is Fe cation.

The protein resides in the cell membrane. It catalyses the reaction a 5-methoxy-2-methyl-3-(all-trans-polyprenyl)benzene-1,4-diol + AH2 + O2 = a 3-demethylubiquinol + A + H2O. It functions in the pathway cofactor biosynthesis; ubiquinone biosynthesis. Catalyzes the hydroxylation of 2-nonaprenyl-3-methyl-6-methoxy-1,4-benzoquinol during ubiquinone biosynthesis. This chain is 3-demethoxyubiquinol 3-hydroxylase, found in Chromohalobacter salexigens (strain ATCC BAA-138 / DSM 3043 / CIP 106854 / NCIMB 13768 / 1H11).